We begin with the raw amino-acid sequence, 622 residues long: Probable potassium transport system protein Kup (622 aa).

The next 12 membrane-spanning stretches (helical) occupy residues leucine 8–leucine 28, valine 50–valine 70, leucine 103–isoleucine 123, proline 137–valine 157, phenylalanine 169–valine 189, phenylalanine 215–leucine 235, tryptophan 247–leucine 267, alanine 285–isoleucine 305, isoleucine 337–phenylalanine 357, alanine 366–isoleucine 386, proline 393–glycine 413, and leucine 419–threonine 439.

Belongs to the HAK/KUP transporter (TC 2.A.72) family.

It localises to the cell inner membrane. It catalyses the reaction K(+)(in) + H(+)(in) = K(+)(out) + H(+)(out). Transport of potassium into the cell. Likely operates as a K(+):H(+) symporter. The sequence is that of Probable potassium transport system protein Kup from Paracidovorax citrulli (strain AAC00-1) (Acidovorax citrulli).